The sequence spans 117 residues: Aspartate 1-decarboxylase (117 aa).

The active-site Schiff-base intermediate with substrate; via pyruvic acid is S25. S25 carries the post-translational modification Pyruvic acid (Ser). T57 contributes to the substrate binding site. Y58 acts as the Proton donor in catalysis. 73–75 (GAA) contributes to the substrate binding site.

This sequence belongs to the PanD family. As to quaternary structure, heterooctamer of four alpha and four beta subunits. Requires pyruvate as cofactor. Post-translationally, is synthesized initially as an inactive proenzyme, which is activated by self-cleavage at a specific serine bond to produce a beta-subunit with a hydroxyl group at its C-terminus and an alpha-subunit with a pyruvoyl group at its N-terminus.

It is found in the cytoplasm. The catalysed reaction is L-aspartate + H(+) = beta-alanine + CO2. Its pathway is cofactor biosynthesis; (R)-pantothenate biosynthesis; beta-alanine from L-aspartate: step 1/1. Its function is as follows. Catalyzes the pyruvoyl-dependent decarboxylation of aspartate to produce beta-alanine. The protein is Aspartate 1-decarboxylase of Thermoanaerobacter pseudethanolicus (strain ATCC 33223 / 39E) (Clostridium thermohydrosulfuricum).